Here is a 294-residue protein sequence, read N- to C-terminus: Acetyl-coenzyme A carboxylase carboxyl transferase subunit beta (294 aa).

A CoA carboxyltransferase N-terminal domain is found at 30-294 (IMTKCPECKK…PETGGESDGE (265 aa)). Zn(2+) contacts are provided by cysteine 34, cysteine 37, cysteine 53, and cysteine 56. Residues 34 to 56 (CPECKKIMYTKELQKNLMVCNYC) form a C4-type zinc finger.

Belongs to the AccD/PCCB family. In terms of assembly, acetyl-CoA carboxylase is a heterohexamer composed of biotin carboxyl carrier protein (AccB), biotin carboxylase (AccC) and two subunits each of ACCase subunit alpha (AccA) and ACCase subunit beta (AccD). Zn(2+) is required as a cofactor.

The protein resides in the cytoplasm. It catalyses the reaction N(6)-carboxybiotinyl-L-lysyl-[protein] + acetyl-CoA = N(6)-biotinyl-L-lysyl-[protein] + malonyl-CoA. It functions in the pathway lipid metabolism; malonyl-CoA biosynthesis; malonyl-CoA from acetyl-CoA: step 1/1. In terms of biological role, component of the acetyl coenzyme A carboxylase (ACC) complex. Biotin carboxylase (BC) catalyzes the carboxylation of biotin on its carrier protein (BCCP) and then the CO(2) group is transferred by the transcarboxylase to acetyl-CoA to form malonyl-CoA. The sequence is that of Acetyl-coenzyme A carboxylase carboxyl transferase subunit beta from Listeria welshimeri serovar 6b (strain ATCC 35897 / DSM 20650 / CCUG 15529 / CIP 8149 / NCTC 11857 / SLCC 5334 / V8).